The following is a 1521-amino-acid chain: Lysophospholipase NTE1 (1521 aa).

At 1–50 (MDVVNSTARAAVTSATAVTAVTGTGDRHPNPLSSAVAAASDVANAHGSSS) the chain is on the cytoplasmic side. The chain crosses the membrane as a helical span at residues 51-71 (WLGLFARVVLWLLQFVSMVLY). At 72–96 (YAIKLATISVPTLLYTLFSTSLTVT) the chain is on the lumenal side. The chain crosses the membrane as a helical span at residues 97-117 (MNATTLMLIVAAMIGAISWVV). Residues 118–1521 (RYRYLNMYSR…RTMAPRRASI (1404 aa)) are Cytoplasmic-facing. Disordered stretches follow at residues 280–301 (HADE…PNYP), 315–372 (SVPN…SAHP), and 738–768 (HAMD…KVDD). Polar residues-rich tracts occupy residues 316 to 334 (VPNT…NNLP) and 738 to 753 (HAMD…QRSP). Residues 670–789 (PASP…GGLA) and 837–957 (RLTN…IASR) each bind a nucleoside 3',5'-cyclic phosphate. Positions 1217–1381 (LVLGGGGARG…VDNLTVSHMK (165 aa)) constitute a PNPLA domain. A GXGXXG motif is present at residues 1221–1226 (GGGARG). The GXSXG motif lies at 1248–1252 (GTSIG). Ser1250 functions as the Nucleophile in the catalytic mechanism. Catalysis depends on Asp1368, which acts as the Proton acceptor. The DGA/G signature appears at 1368–1370 (DGG).

It belongs to the NTE family.

The protein localises to the endoplasmic reticulum membrane. The enzyme catalyses a 1-acyl-sn-glycero-3-phosphocholine + H2O = sn-glycerol 3-phosphocholine + a fatty acid + H(+). Inhibited by organophosphorus esters. In terms of biological role, intracellular phospholipase B that catalyzes the double deacylation of phosphatidylcholine (PC) to glycerophosphocholine (GroPCho). Plays an important role in membrane lipid homeostasis. Responsible for the rapid PC turnover in response to inositol, elevated temperatures, or when choline is present in the growth medium. This Chaetomium globosum (strain ATCC 6205 / CBS 148.51 / DSM 1962 / NBRC 6347 / NRRL 1970) (Soil fungus) protein is Lysophospholipase NTE1 (NTE1).